A 367-amino-acid polypeptide reads, in one-letter code: MKRVVVLGSTGSIGQQALEVCRLRGYEVVGLAAGKNLEALSRQIALWKPRLVAAEESLHKELKARFPGLRLATAEEVAALEAEVAVAAIPGLAGLAPTRAAVRTGKRVALANKEAMVAAGPLLWREAEAHGAEILPVDSEHSALFQALLGERREDVAELILTASGGPFLREPEDLAQVTPEMALRHPRWRMGPKVTVDSATLFNKGLEVLEAKELFRFPLERIQVLIHPQAYVHGLVRFVDGSLKAQLGPTDMRLFIQYALTYPERAETPLKDLPIPGVLEFLEPDLKRFPALAVAYEAGRRGGLAQVAVSAADEVAVEAFLQGKIPFPRIPEILARVLEATPTEPLTWESLFAVDAWAREEAKRWA.

NADPH contacts are provided by Thr-10, Gly-11, Ser-12, Ile-13, Gly-34, Lys-35, Asn-36, and Asn-112. 1-deoxy-D-xylulose 5-phosphate is bound at residue Lys-113. Glu-114 is an NADPH binding site. Asp-138 lines the Mn(2+) pocket. 1-deoxy-D-xylulose 5-phosphate contacts are provided by Ser-139, Glu-140, Ser-164, and His-186. Glu-140 serves as a coordination point for Mn(2+). Gly-192 is a binding site for NADPH. Residues Ser-199, Asn-204, Lys-205, and Glu-208 each contribute to the 1-deoxy-D-xylulose 5-phosphate site. Glu-208 contributes to the Mn(2+) binding site.

It belongs to the DXR family. Mg(2+) serves as cofactor. Requires Mn(2+) as cofactor.

It carries out the reaction 2-C-methyl-D-erythritol 4-phosphate + NADP(+) = 1-deoxy-D-xylulose 5-phosphate + NADPH + H(+). It functions in the pathway isoprenoid biosynthesis; isopentenyl diphosphate biosynthesis via DXP pathway; isopentenyl diphosphate from 1-deoxy-D-xylulose 5-phosphate: step 1/6. Catalyzes the NADPH-dependent rearrangement and reduction of 1-deoxy-D-xylulose-5-phosphate (DXP) to 2-C-methyl-D-erythritol 4-phosphate (MEP). The sequence is that of 1-deoxy-D-xylulose 5-phosphate reductoisomerase from Thermus thermophilus (strain ATCC BAA-163 / DSM 7039 / HB27).